The following is a 322-amino-acid chain: Homoserine kinase (322 aa).

107–117 contacts ATP; that stretch reads PLSSGMGGSAA.

Belongs to the GHMP kinase family. Homoserine kinase subfamily.

It is found in the cytoplasm. It carries out the reaction L-homoserine + ATP = O-phospho-L-homoserine + ADP + H(+). Its pathway is amino-acid biosynthesis; L-threonine biosynthesis; L-threonine from L-aspartate: step 4/5. Its function is as follows. Catalyzes the ATP-dependent phosphorylation of L-homoserine to L-homoserine phosphate. The protein is Homoserine kinase of Xylella fastidiosa (strain M23).